Reading from the N-terminus, the 129-residue chain is Small ribosomal subunit protein uS11 (129 aa).

The interval 108 to 129 (TPIPHNGTRPPKRVLKRLRLKK) is disordered. The segment covering 117-129 (PPKRVLKRLRLKK) has biased composition (basic residues).

Belongs to the universal ribosomal protein uS11 family. In terms of assembly, part of the 30S ribosomal subunit. Interacts with proteins S7 and S18. Binds to IF-3.

Located on the platform of the 30S subunit, it bridges several disparate RNA helices of the 16S rRNA. Forms part of the Shine-Dalgarno cleft in the 70S ribosome. This Mycoplasmopsis synoviae (strain 53) (Mycoplasma synoviae) protein is Small ribosomal subunit protein uS11.